Here is a 634-residue protein sequence, read N- to C-terminus: Threonine--tRNA ligase (634 aa).

The region spanning 1 to 61 is the TGS domain; sequence MINITLPDGS…DHDASLRIIT (61 aa). Residues 243–534 are catalytic; the sequence is DHRRIGKAQD…LIEHHAGAFP (292 aa). Zn(2+) contacts are provided by cysteine 334, histidine 385, and histidine 511.

This sequence belongs to the class-II aminoacyl-tRNA synthetase family. As to quaternary structure, homodimer. Zn(2+) is required as a cofactor.

Its subcellular location is the cytoplasm. The enzyme catalyses tRNA(Thr) + L-threonine + ATP = L-threonyl-tRNA(Thr) + AMP + diphosphate + H(+). In terms of biological role, catalyzes the attachment of threonine to tRNA(Thr) in a two-step reaction: L-threonine is first activated by ATP to form Thr-AMP and then transferred to the acceptor end of tRNA(Thr). Also edits incorrectly charged L-seryl-tRNA(Thr). This chain is Threonine--tRNA ligase, found in Xanthomonas axonopodis pv. citri (strain 306).